The following is a 78-amino-acid chain: Large ribosomal subunit protein bL28 (78 aa).

Residues 1–25 (MSRVCQVTGKRPAVGNNRSHARNAT) are disordered.

It belongs to the bacterial ribosomal protein bL28 family.

This is Large ribosomal subunit protein bL28 from Vibrio vulnificus (strain CMCP6).